The primary structure comprises 441 residues: ATP-dependent protease ATPase subunit HslU (441 aa).

ATP-binding positions include I18, G60–E65, D254, E319, and R391.

This sequence belongs to the ClpX chaperone family. HslU subfamily. As to quaternary structure, a double ring-shaped homohexamer of HslV is capped on each side by a ring-shaped HslU homohexamer. The assembly of the HslU/HslV complex is dependent on binding of ATP.

Its subcellular location is the cytoplasm. Its function is as follows. ATPase subunit of a proteasome-like degradation complex; this subunit has chaperone activity. The binding of ATP and its subsequent hydrolysis by HslU are essential for unfolding of protein substrates subsequently hydrolyzed by HslV. HslU recognizes the N-terminal part of its protein substrates and unfolds these before they are guided to HslV for hydrolysis. In Shewanella loihica (strain ATCC BAA-1088 / PV-4), this protein is ATP-dependent protease ATPase subunit HslU.